We begin with the raw amino-acid sequence, 276 residues long: Ribosomal RNA small subunit methyltransferase A (276 aa).

6 residues coordinate S-adenosyl-L-methionine: Asn27, Leu29, Gly54, Glu75, Asp101, and Asn122.

The protein belongs to the class I-like SAM-binding methyltransferase superfamily. rRNA adenine N(6)-methyltransferase family. RsmA subfamily.

It localises to the cytoplasm. The enzyme catalyses adenosine(1518)/adenosine(1519) in 16S rRNA + 4 S-adenosyl-L-methionine = N(6)-dimethyladenosine(1518)/N(6)-dimethyladenosine(1519) in 16S rRNA + 4 S-adenosyl-L-homocysteine + 4 H(+). Its function is as follows. Specifically dimethylates two adjacent adenosines (A1518 and A1519) in the loop of a conserved hairpin near the 3'-end of 16S rRNA in the 30S particle. May play a critical role in biogenesis of 30S subunits. The chain is Ribosomal RNA small subunit methyltransferase A from Brucella suis (strain ATCC 23445 / NCTC 10510).